The following is a 237-amino-acid chain: Methylosome subunit pICln (237 aa).

N-acetylserine is present on S2. Phosphoserine is present on residues S102, S144, S193, S195, S198, and S210. The segment at L135–Q159 is disordered. Acidic residues predominate over residues P139–D153. T223 is subject to Phosphothreonine.

Belongs to the pICln (TC 1.A.47) family. As to quaternary structure, component of the methylosome, a 20S complex containing at least PRMT5/SKB1, WDR77/MEP50 and CLNS1A/pICln. May mediate SNRPD1 and SNRPD3 methylation. Forms a 6S pICln-Sm complex composed of CLNS1A/pICln, SNRPD1, SNRPD2, SNRPE, SNRPF and SNRPG; ring-like structure where CLNS1A/pICln mimics additional Sm proteins and which is unable to assemble into the core snRNP. Interacts with LSM10 and LSM11.

It is found in the cytoplasm. It localises to the cytosol. Its subcellular location is the nucleus. The protein resides in the cytoskeleton. Involved in both the assembly of spliceosomal snRNPs and the methylation of Sm proteins. Chaperone that regulates the assembly of spliceosomal U1, U2, U4 and U5 small nuclear ribonucleoproteins (snRNPs), the building blocks of the spliceosome, and thereby plays an important role in the splicing of cellular pre-mRNAs. Most spliceosomal snRNPs contain a common set of Sm proteins SNRPB, SNRPD1, SNRPD2, SNRPD3, SNRPE, SNRPF and SNRPG that assemble in a heptameric protein ring on the Sm site of the small nuclear RNA to form the core snRNP (Sm core). In the cytosol, the Sm proteins SNRPD1, SNRPD2, SNRPE, SNRPF and SNRPG are trapped in an inactive 6S pICln-Sm complex by the chaperone CLNS1A that controls the assembly of the core snRNP. Dissociation by the SMN complex of CLNS1A from the trapped Sm proteins and their transfer to an SMN-Sm complex triggers the assembly of core snRNPs and their transport to the nucleus. The protein is Methylosome subunit pICln (CLNS1A) of Homo sapiens (Human).